We begin with the raw amino-acid sequence, 715 residues long: MSGGAVAFLLLVAAAAVANAAVTYDHRSLTINGQRRILISGSIHYPRSTPEMWPDLIQKAKDGGLDVIQTYVFWNGHEPVQGQYYFSDRYDLVRFVKLVKQAGLYVNLRIGPYVCAEWNYGGFPVWLKYVPGISFRTDNGPFKAAMQTFVEKIVSMMKSEGLFEWQGGPIILAQVENEYGPMESVMGSGAKSYVDWAAKMAVATNAGVPWIMCKQDDAPDPVINTCNGFYCDDFTPNSKNKPSMWTEAWSGWFTAFGGTVPQRPVEDLAFAVARFIQKGGSFINYYMYHGGTNFDRTAGGPFIATSYDYDAPIDEYGLLRQPKWGHLTNLHKAIKQAETALVAGDPTVQNIGNYEKAYVFRSSSGDCAAFLSNFHTSAAARVAFNGRRYDLPAWSISVLPDCRTAVYNTATVTAASSPAKMNPAGGFTWQSYGEATNSLDETAFTKDGLVEQLSMTWDKSDYLWYTTYVNIDSGEQFLKSGQWPQLTVYSAGHSVQVFVNGQYFGNAYGGYDGPKLTYSGYVKMWQGSNKISILSSAVGLPNVGTHYETWNIGVLGPVTLSGLNEGKRDLSKQKWTYQIGLKGEKLGVHSVSGSSSVEWGGAAGKQPVTWHRAYFNAPAGGAPVALDLGSMGKGQAWVNGHLIGRYWSYKASGNCGGCSYAGTYSEKKCQANCGDASQRWYHVPRSWLNPSGNLVVLLEEFGGDLSGVTLMTRTT.

The N-terminal stretch at 1–20 (MSGGAVAFLLLVAAAAVANA) is a signal peptide. Residue Glu178 is the Proton donor of the active site. Glu247 serves as the catalytic Nucleophile.

Belongs to the glycosyl hydrolase 35 family.

It localises to the secreted. The protein resides in the extracellular space. The protein localises to the apoplast. The enzyme catalyses Hydrolysis of terminal non-reducing beta-D-galactose residues in beta-D-galactosides.. This Oryza sativa subsp. japonica (Rice) protein is Beta-galactosidase 9.